A 538-amino-acid chain; its full sequence is Atos homolog protein B (538 aa).

Residues 1 to 18 are compositionally biased toward low complexity; it reads MRHVQAEPSPSSEPEAGP. Disordered stretches follow at residues 1-103, 153-185, 197-300, and 323-342; these read MRHV…GLLG, NTLH…QLHT, GGKS…VLDP, and SLRK…VPTP. Over residues 227-238 the composition is skewed to pro residues; it reads HTPPGPGPPGPC. 2 positions are modified to phosphoserine: S254 and S255. Over residues 323-334 the composition is skewed to low complexity; that stretch reads SLRKGPGLLSPP. The interval 348–430 is required for macropage invasion; sequence LLGSFEESLL…VPKVGTIQVT (83 aa). Positions 436 to 444 are transactivation domain 1 (TAD1); it reads QTVVKMFLV.

This sequence belongs to the ATOS family.

It is found in the nucleus. Functionally, transcription regulator that may syncronize transcriptional and translational programs. The sequence is that of Atos homolog protein B from Pongo abelii (Sumatran orangutan).